Consider the following 122-residue polypeptide: MADLKQFAEQLVNLTVKEVNDLATILKDEYGIEPAAAAVVMQAGGGEAAEEAQTEFTVVLKEAGASKLAVVKAVKELTGLGLKEAKDLVDAAPSNVKEGVSKDEAEGLKKSLEEAGAVVELK.

The protein belongs to the bacterial ribosomal protein bL12 family. As to quaternary structure, homodimer. Part of the ribosomal stalk of the 50S ribosomal subunit. Forms a multimeric L10(L12)X complex, where L10 forms an elongated spine to which 2 to 4 L12 dimers bind in a sequential fashion. Binds GTP-bound translation factors.

Forms part of the ribosomal stalk which helps the ribosome interact with GTP-bound translation factors. Is thus essential for accurate translation. The protein is Large ribosomal subunit protein bL12 of Flavobacterium psychrophilum (strain ATCC 49511 / DSM 21280 / CIP 103535 / JIP02/86).